The primary structure comprises 161 residues: Phosphopantetheine adenylyltransferase (161 aa).

Residue S8 participates in substrate binding. ATP is bound by residues 8–9 and H16; that span reads SF. 3 residues coordinate substrate: K40, T72, and R86. Residues 87-89, E97, and 122-128 contribute to the ATP site; these read GLR and HSFLSSS.

Belongs to the bacterial CoaD family. In terms of assembly, homohexamer. Requires Mg(2+) as cofactor.

It is found in the cytoplasm. It catalyses the reaction (R)-4'-phosphopantetheine + ATP + H(+) = 3'-dephospho-CoA + diphosphate. The protein operates within cofactor biosynthesis; coenzyme A biosynthesis; CoA from (R)-pantothenate: step 4/5. Its function is as follows. Reversibly transfers an adenylyl group from ATP to 4'-phosphopantetheine, yielding dephospho-CoA (dPCoA) and pyrophosphate. The chain is Phosphopantetheine adenylyltransferase from Gloeobacter violaceus (strain ATCC 29082 / PCC 7421).